The sequence spans 474 residues: Transcription factor fscB (474 aa).

2 disordered regions span residues 114–153 (VDELELSSDTRSSLSPSSHNTTTGHETGLSSVTPPQSYWT) and 207–242 (GKEVTKRNKRSRTEAQEASNSPCASSTADSQTNPAP). Low complexity predominate over residues 120–131 (SSDTRSSLSPSS). Polar residues predominate over residues 132–153 (HNTTTGHETGLSSVTPPQSYWT). A compositionally biased stretch (basic and acidic residues) spans 207–221 (GKEVTKRNKRSRTEA). The segment covering 222 to 240 (QEASNSPCASSTADSQTNP) has biased composition (polar residues).

It belongs to the POU transcription factor family. Class-3 subfamily.

The protein localises to the nucleus. In terms of biological role, transcription factor; part of the fragmented gene cluster that mediates the biosynthesis of fusarochromene, a tryptophan-derived metabolite closely related to a group of mycotoxins including fusarochromanone. The sequence is that of Transcription factor fscB from Fusarium equiseti (Fusarium scirpi).